Reading from the N-terminus, the 340-residue chain is Arginase 1, mitochondrial (340 aa).

The N-terminal 24 residues, 1 to 24, are a transit peptide targeting the mitochondrion; it reads MGGVAAGTRWIHHVRRLSAAKVST. 4 residues coordinate Mn(2+): His159, Asp183, His185, and Asp187. Residues 185 to 189 and 193 to 195 each bind substrate; these read HPDIY and EGN. Asp268 and Asp270 together coordinate Mn(2+). A substrate-binding site is contributed by Glu311.

It belongs to the arginase family. Mn(2+) serves as cofactor.

It localises to the mitochondrion. It catalyses the reaction L-arginine + H2O = urea + L-ornithine. The protein operates within nitrogen metabolism; urea cycle; L-ornithine and urea from L-arginine: step 1/1. Functionally, catalyzes the hydrolysis of L-arginine to urea and L-ornithine. The latter can be utilized in the urea cycle or as a precursor for the synthesis of both polyamines and proline. The sequence is that of Arginase 1, mitochondrial from Oryza sativa subsp. indica (Rice).